Reading from the N-terminus, the 233-residue chain is 5'-methylthioadenosine/S-adenosylhomocysteine nucleosidase (233 aa).

The active-site Proton acceptor is the E12. Substrate-binding positions include G78, I156, and 177–178 (ME). D201 functions as the Proton donor in the catalytic mechanism.

This sequence belongs to the PNP/UDP phosphorylase family. MtnN subfamily.

The enzyme catalyses S-adenosyl-L-homocysteine + H2O = S-(5-deoxy-D-ribos-5-yl)-L-homocysteine + adenine. It catalyses the reaction S-methyl-5'-thioadenosine + H2O = 5-(methylsulfanyl)-D-ribose + adenine. It carries out the reaction 5'-deoxyadenosine + H2O = 5-deoxy-D-ribose + adenine. Its pathway is amino-acid biosynthesis; L-methionine biosynthesis via salvage pathway; S-methyl-5-thio-alpha-D-ribose 1-phosphate from S-methyl-5'-thioadenosine (hydrolase route): step 1/2. In terms of biological role, catalyzes the irreversible cleavage of the glycosidic bond in both 5'-methylthioadenosine (MTA) and S-adenosylhomocysteine (SAH/AdoHcy) to adenine and the corresponding thioribose, 5'-methylthioribose and S-ribosylhomocysteine, respectively. Also cleaves 5'-deoxyadenosine, a toxic by-product of radical S-adenosylmethionine (SAM) enzymes, into 5-deoxyribose and adenine. This chain is 5'-methylthioadenosine/S-adenosylhomocysteine nucleosidase, found in Listeria innocua serovar 6a (strain ATCC BAA-680 / CLIP 11262).